We begin with the raw amino-acid sequence, 66 residues long: Large ribosomal subunit protein uL29 (66 aa).

It belongs to the universal ribosomal protein uL29 family.

The protein is Large ribosomal subunit protein uL29 of Lysinibacillus sphaericus (strain C3-41).